Consider the following 315-residue polypeptide: Homoserine kinase (315 aa).

97 to 107 contacts ATP; the sequence is PPARGLGSSAT.

This sequence belongs to the GHMP kinase family. Homoserine kinase subfamily.

The protein localises to the cytoplasm. It carries out the reaction L-homoserine + ATP = O-phospho-L-homoserine + ADP + H(+). It participates in amino-acid biosynthesis; L-threonine biosynthesis; L-threonine from L-aspartate: step 4/5. Functionally, catalyzes the ATP-dependent phosphorylation of L-homoserine to L-homoserine phosphate. The polypeptide is Homoserine kinase (Prochlorococcus marinus subsp. pastoris (strain CCMP1986 / NIES-2087 / MED4)).